The sequence spans 968 residues: RNA polymerase-associated protein RapA (968 aa).

The region spanning 164–334 (DVGRRHAPRV…FARLRLLDPN (171 aa)) is the Helicase ATP-binding domain. 177-184 (DEVGLGKT) lines the ATP pocket. The short motif at 280 to 283 (DEAH) is the DEAH box element. The 155-residue stretch at 490 to 644 (RVEWLMGYLT…TCPTGRTVYD (155 aa)) folds into the Helicase C-terminal domain.

Belongs to the SNF2/RAD54 helicase family. RapA subfamily. As to quaternary structure, interacts with the RNAP. Has a higher affinity for the core RNAP than for the holoenzyme. Its ATPase activity is stimulated by binding to RNAP.

Its function is as follows. Transcription regulator that activates transcription by stimulating RNA polymerase (RNAP) recycling in case of stress conditions such as supercoiled DNA or high salt concentrations. Probably acts by releasing the RNAP, when it is trapped or immobilized on tightly supercoiled DNA. Does not activate transcription on linear DNA. Probably not involved in DNA repair. In Klebsiella pneumoniae subsp. pneumoniae (strain ATCC 700721 / MGH 78578), this protein is RNA polymerase-associated protein RapA.